An 802-amino-acid polypeptide reads, in one-letter code: Copper-exporting P-type ATPase (802 aa).

HMA domains follow at residues 5–70 (KKTT…YGVA) and 72–138 (ETVE…YDAS). Cu(+)-binding residues include C16, C19, C83, and C86. A run of 6 helical transmembrane segments spans residues 161-181 (LIISAVLSLPLLMLMFVHLFN), 192-212 (WFQFILATPVQFIIGWQFYVG), 224-244 (MDVLVAVGTSAAYFYSIYEMV), 256-276 (LYFETSAVLITLILFGKYLEA), 411-431 (YFVPIVVGIALLTFIVWITLV), and 438-458 (PALVASISVLVIACPCALGLA). D495 serves as the catalytic 4-aspartylphosphate intermediate. The Mg(2+) site is built by D690 and D694. Helical transmembrane passes span 748–767 (LFWAFGYNIAGIPIAALGLL) and 771–790 (VAGAAMALSSVSVVTNALRL).

This sequence belongs to the cation transport ATPase (P-type) (TC 3.A.3) family. Type IB subfamily.

The protein localises to the cell membrane. The catalysed reaction is Cu(+)(in) + ATP + H2O = Cu(+)(out) + ADP + phosphate + H(+). Functionally, involved in copper export. This is Copper-exporting P-type ATPase (copA) from Staphylococcus aureus (strain USA300 / TCH1516).